Here is a 338-residue protein sequence, read N- to C-terminus: Probable family 20 transposase (338 aa).

This sequence belongs to the transposase 20 family.

Its function is as follows. Required for the transposition of an insertion element. The protein is Probable family 20 transposase of Pseudomonas aeruginosa (strain ATCC 15692 / DSM 22644 / CIP 104116 / JCM 14847 / LMG 12228 / 1C / PRS 101 / PAO1).